The chain runs to 448 residues: Antizyme inhibitor 1 (448 aa).

It belongs to the Orn/Lys/Arg decarboxylase class-II family. ODC antizyme inhibitor subfamily. Monomer. Interacts with OAZ1 and OAZ3; this interaction disrupts the interaction between the antizyme and ODC1. In terms of processing, ubiquitinated, leading to its proteasomal degradation; a process that is reduced in presence of antizyme OAZ1. In terms of tissue distribution, expressed during testis development.

It localises to the nucleus. Functionally, antizyme inhibitor (AZI) protein that positively regulates ornithine decarboxylase (ODC) activity and polyamine uptake. AZI is an enzymatically inactive ODC homolog that counteracts the negative effect of ODC antizymes (AZs) OAZ1, OAZ2 and OAZ3 on ODC activity by competing with ODC for antizyme-binding. Inhibits antizyme-dependent ODC degradation and releases ODC monomers from their inactive complex with antizymes, leading to formation of the catalytically active ODC homodimer and restoring polyamine production. This chain is Antizyme inhibitor 1 (Azin1), found in Mus musculus (Mouse).